Here is a 450-residue protein sequence, read N- to C-terminus: Phosphoglucosamine mutase (450 aa).

Residue S103 is the Phosphoserine intermediate of the active site. Residues S103, D243, D245, and D247 each coordinate Mg(2+). A Phosphoserine modification is found at S103.

The protein belongs to the phosphohexose mutase family. Mg(2+) is required as a cofactor. In terms of processing, activated by phosphorylation.

The enzyme catalyses alpha-D-glucosamine 1-phosphate = D-glucosamine 6-phosphate. In terms of biological role, catalyzes the conversion of glucosamine-6-phosphate to glucosamine-1-phosphate. The chain is Phosphoglucosamine mutase from Lactobacillus delbrueckii subsp. bulgaricus (strain ATCC 11842 / DSM 20081 / BCRC 10696 / JCM 1002 / NBRC 13953 / NCIMB 11778 / NCTC 12712 / WDCM 00102 / Lb 14).